A 557-amino-acid chain; its full sequence is Dihydroxy-acid dehydratase (557 aa).

Aspartate 78 is a Mg(2+) binding site. [2Fe-2S] cluster is bound at residue cysteine 119. Positions 120 and 121 each coordinate Mg(2+). Lysine 121 is subject to N6-carboxylysine. Cysteine 192 is a binding site for [2Fe-2S] cluster. Glutamate 443 contributes to the Mg(2+) binding site. Serine 469 serves as the catalytic Proton acceptor.

The protein belongs to the IlvD/Edd family. Homodimer. The cofactor is [2Fe-2S] cluster. Mg(2+) is required as a cofactor.

It catalyses the reaction (2R)-2,3-dihydroxy-3-methylbutanoate = 3-methyl-2-oxobutanoate + H2O. It carries out the reaction (2R,3R)-2,3-dihydroxy-3-methylpentanoate = (S)-3-methyl-2-oxopentanoate + H2O. It functions in the pathway amino-acid biosynthesis; L-isoleucine biosynthesis; L-isoleucine from 2-oxobutanoate: step 3/4. The protein operates within amino-acid biosynthesis; L-valine biosynthesis; L-valine from pyruvate: step 3/4. Functions in the biosynthesis of branched-chain amino acids. Catalyzes the dehydration of (2R,3R)-2,3-dihydroxy-3-methylpentanoate (2,3-dihydroxy-3-methylvalerate) into 2-oxo-3-methylpentanoate (2-oxo-3-methylvalerate) and of (2R)-2,3-dihydroxy-3-methylbutanoate (2,3-dihydroxyisovalerate) into 2-oxo-3-methylbutanoate (2-oxoisovalerate), the penultimate precursor to L-isoleucine and L-valine, respectively. The protein is Dihydroxy-acid dehydratase of Persephonella marina (strain DSM 14350 / EX-H1).